The chain runs to 477 residues: UDP-N-acetylmuramate--L-alanine ligase (477 aa).

Gly122–Thr128 serves as a coordination point for ATP.

The protein belongs to the MurCDEF family.

The protein localises to the cytoplasm. It catalyses the reaction UDP-N-acetyl-alpha-D-muramate + L-alanine + ATP = UDP-N-acetyl-alpha-D-muramoyl-L-alanine + ADP + phosphate + H(+). It participates in cell wall biogenesis; peptidoglycan biosynthesis. Cell wall formation. In Xanthomonas oryzae pv. oryzae (strain MAFF 311018), this protein is UDP-N-acetylmuramate--L-alanine ligase.